A 182-amino-acid polypeptide reads, in one-letter code: Ribosome maturation factor RimP (182 aa).

Belongs to the RimP family.

It localises to the cytoplasm. Functionally, required for maturation of 30S ribosomal subunits. The polypeptide is Ribosome maturation factor RimP (Corynebacterium efficiens (strain DSM 44549 / YS-314 / AJ 12310 / JCM 11189 / NBRC 100395)).